Here is a 203-residue protein sequence, read N- to C-terminus: Holliday junction branch migration complex subunit RuvA (203 aa).

The domain I stretch occupies residues 1–64; that stretch reads MIGRLRGIII…EDAQLLYGFN (64 aa). Residues 65 to 142 are domain II; it reads NKQERTLFKE…KGLHGDLFTP (78 aa). Positions 143–154 are flexible linker; the sequence is AADLVLTSPASP. The segment at 155-203 is domain III; it reads ATDDAEQEAVAALVALGYKPQEASRMVSKIARPDASSETLIREALRAAL.

It belongs to the RuvA family. As to quaternary structure, homotetramer. Forms an RuvA(8)-RuvB(12)-Holliday junction (HJ) complex. HJ DNA is sandwiched between 2 RuvA tetramers; dsDNA enters through RuvA and exits via RuvB. An RuvB hexamer assembles on each DNA strand where it exits the tetramer. Each RuvB hexamer is contacted by two RuvA subunits (via domain III) on 2 adjacent RuvB subunits; this complex drives branch migration. In the full resolvosome a probable DNA-RuvA(4)-RuvB(12)-RuvC(2) complex forms which resolves the HJ.

Its subcellular location is the cytoplasm. Its function is as follows. The RuvA-RuvB-RuvC complex processes Holliday junction (HJ) DNA during genetic recombination and DNA repair, while the RuvA-RuvB complex plays an important role in the rescue of blocked DNA replication forks via replication fork reversal (RFR). RuvA specifically binds to HJ cruciform DNA, conferring on it an open structure. The RuvB hexamer acts as an ATP-dependent pump, pulling dsDNA into and through the RuvAB complex. HJ branch migration allows RuvC to scan DNA until it finds its consensus sequence, where it cleaves and resolves the cruciform DNA. The sequence is that of Holliday junction branch migration complex subunit RuvA from Shigella boydii serotype 18 (strain CDC 3083-94 / BS512).